The primary structure comprises 396 residues: Tyrosine--tRNA ligase (396 aa).

Positions 43–52 match the 'HIGH' region motif; that stretch reads PSSPDIHLGH. The 'KMSKS' region signature appears at 227–231; the sequence is KMSKS. Position 230 (Lys-230) interacts with ATP. Residues 338-396 enclose the S4 RNA-binding domain; sequence ICVIDFIIKADLAKSKSEARRLLEQGGVEINSAKISDPGTTVKCGDIIKAGKRRYSKAV.

It belongs to the class-I aminoacyl-tRNA synthetase family. TyrS type 2 subfamily. Homodimer.

It is found in the cytoplasm. The catalysed reaction is tRNA(Tyr) + L-tyrosine + ATP = L-tyrosyl-tRNA(Tyr) + AMP + diphosphate + H(+). Functionally, catalyzes the attachment of tyrosine to tRNA(Tyr) in a two-step reaction: tyrosine is first activated by ATP to form Tyr-AMP and then transferred to the acceptor end of tRNA(Tyr). In Dehalococcoides mccartyi (strain ATCC BAA-2266 / KCTC 15142 / 195) (Dehalococcoides ethenogenes (strain 195)), this protein is Tyrosine--tRNA ligase.